The sequence spans 122 residues: Large ribosomal subunit protein uL14 (122 aa).

Belongs to the universal ribosomal protein uL14 family. Part of the 50S ribosomal subunit. Forms a cluster with proteins L3 and L19. In the 70S ribosome, L14 and L19 interact and together make contacts with the 16S rRNA in bridges B5 and B8.

Functionally, binds to 23S rRNA. Forms part of two intersubunit bridges in the 70S ribosome. The protein is Large ribosomal subunit protein uL14 of Shewanella denitrificans (strain OS217 / ATCC BAA-1090 / DSM 15013).